Reading from the N-terminus, the 213-residue chain is Orotate phosphoribosyltransferase (213 aa).

Residue K26 coordinates 5-phospho-alpha-D-ribose 1-diphosphate. 34–35 (FF) provides a ligand contact to orotate. 5-phospho-alpha-D-ribose 1-diphosphate contacts are provided by residues 72–73 (YK), R99, K100, K103, H105, and 124–132 (DDVITAGTS). Orotate contacts are provided by T128 and R156.

The protein belongs to the purine/pyrimidine phosphoribosyltransferase family. PyrE subfamily. As to quaternary structure, homodimer. It depends on Mg(2+) as a cofactor.

The enzyme catalyses orotidine 5'-phosphate + diphosphate = orotate + 5-phospho-alpha-D-ribose 1-diphosphate. Its pathway is pyrimidine metabolism; UMP biosynthesis via de novo pathway; UMP from orotate: step 1/2. Functionally, catalyzes the transfer of a ribosyl phosphate group from 5-phosphoribose 1-diphosphate to orotate, leading to the formation of orotidine monophosphate (OMP). The protein is Orotate phosphoribosyltransferase of Methylococcus capsulatus (strain ATCC 33009 / NCIMB 11132 / Bath).